The sequence spans 2312 residues: Protein Ycf2 (2312 aa).

1630–1637 contributes to the ATP binding site; sequence GSIGTGRS.

It belongs to the Ycf2 family.

Its subcellular location is the plastid. It is found in the chloroplast stroma. In terms of biological role, probable ATPase of unknown function. Its presence in a non-photosynthetic plant (Epifagus virginiana) and experiments in tobacco indicate that it has an essential function which is probably not related to photosynthesis. The chain is Protein Ycf2 from Manihot esculenta (Cassava).